The following is a 298-amino-acid chain: MPVDKNLRDLEPGIHTDLEGRLTYGGYLRLDQLLSAQQPLSEPAHHDEMLFIIQHQTSELWLKLLAHELRAAIVHLQRDEVWQCRKVLARSKQVLRQLTEQWSVLETLTPSEYMGFRDVLGPSSGFQSLQYRYIEFLLGNKNPQMLQVFAYDPHGQARLREALEAPSLYEEFLRYLARFGHAIPQHYQARDWTAAHVADDSLRPVFERIYENTDRYWREYALCEDLVDVETQFQLWRFRHMRTVMRVIGFKRGTGGSSGVGFLQQALALTFFPELFDVRTSVGVDGRPPQGAPDAAQG.

Substrate contacts are provided by residues 51–55 (FIIQH), Tyr-113, and Arg-117. Residue His-240 coordinates heme. Thr-254 contributes to the substrate binding site.

The protein belongs to the tryptophan 2,3-dioxygenase family. In terms of assembly, homotetramer. Heme serves as cofactor.

The catalysed reaction is L-tryptophan + O2 = N-formyl-L-kynurenine. It participates in amino-acid degradation; L-tryptophan degradation via kynurenine pathway; L-kynurenine from L-tryptophan: step 1/2. Heme-dependent dioxygenase that catalyzes the oxidative cleavage of the L-tryptophan (L-Trp) pyrrole ring and converts L-tryptophan to N-formyl-L-kynurenine. Catalyzes the oxidative cleavage of the indole moiety. This Xanthomonas euvesicatoria pv. vesicatoria (strain 85-10) (Xanthomonas campestris pv. vesicatoria) protein is Tryptophan 2,3-dioxygenase.